Here is a 672-residue protein sequence, read N- to C-terminus: NADPH-Fe(3+) oxidoreductase subunit beta (672 aa).

[4Fe-4S] cluster is bound by residues cysteine 203, cysteine 207, cysteine 211, and cysteine 215. Lysine 254 to glutamate 283 contacts FAD. Glycine 388–arginine 421 contacts NADP(+). Threonine 552–aspartate 562 is a binding site for FAD.

In terms of assembly, heterotetramer with 2 alpha subunits. Requires [4Fe-4S] cluster as cofactor. FAD serves as cofactor.

It is found in the cell membrane. Probably involved in acetate metabolism and not in the reduction of Fe(3+) chelates. May serve as a major route for NADP regeneration. This chain is NADPH-Fe(3+) oxidoreductase subunit beta (sfrB), found in Geobacter sulfurreducens (strain DL-1 / KN400).